A 291-amino-acid chain; its full sequence is Beta-lactamase CTX-M-6 (291 aa).

Residues 1–28 (MMTQSIRRSMLTVMATLPLLFSSATLHA) form the signal peptide. Ser73 acts as the Acyl-ester intermediate in catalysis. 237–239 (KTG) serves as a coordination point for substrate.

The protein belongs to the class-A beta-lactamase family.

It carries out the reaction a beta-lactam + H2O = a substituted beta-amino acid. Functionally, has cefotaxime-hydrolyzing activity. This chain is Beta-lactamase CTX-M-6 (bla), found in Salmonella typhimurium.